The chain runs to 210 residues: Uridine kinase (210 aa).

12 to 19 is a binding site for ATP; the sequence is GGSGSGKT.

The protein belongs to the uridine kinase family.

The protein resides in the cytoplasm. It carries out the reaction uridine + ATP = UMP + ADP + H(+). It catalyses the reaction cytidine + ATP = CMP + ADP + H(+). It functions in the pathway pyrimidine metabolism; CTP biosynthesis via salvage pathway; CTP from cytidine: step 1/3. Its pathway is pyrimidine metabolism; UMP biosynthesis via salvage pathway; UMP from uridine: step 1/1. The polypeptide is Uridine kinase (Leuconostoc citreum (strain KM20)).